Reading from the N-terminus, the 387-residue chain is Palmitoyltransferase ZDHHC16A (387 aa).

2 helical membrane passes run 73–93 (WFGM…VFIA) and 106–126 (SPGW…MIVF). Residues 150–200 (SVCKKCIIPKPARSHHCGICKTCILKMDHHCPWLNNCVGHFNHRYFFSFCL) form the DHHC domain. Residue Cys180 is the S-palmitoyl cysteine intermediate of the active site. Helical transmembrane passes span 198–218 (FCLF…HLFI), 236–256 (GVPV…GVAG), and 281–301 (VIYM…LTLW).

The protein belongs to the DHHC palmitoyltransferase family. In terms of tissue distribution, expressed in the central nervous system (CNS). Expressed in the developing forebrain, and especially in the telencephalon.

It is found in the endoplasmic reticulum membrane. The catalysed reaction is L-cysteinyl-[protein] + hexadecanoyl-CoA = S-hexadecanoyl-L-cysteinyl-[protein] + CoA. Its function is as follows. Palmitoyl acyltransferase that mediates palmitoylation of proteins and is required during embryonic heart development. Involved in the proliferation of neural stem cells by regulating the FGF/ERK pathway. Involved in the proliferation of neural stem cells by regulating the FGF/ERK pathway. This Danio rerio (Zebrafish) protein is Palmitoyltransferase ZDHHC16A.